Reading from the N-terminus, the 558-residue chain is WW domain-containing adapter protein with coiled-coil (558 aa).

Disordered regions lie at residues 1–129 (MVMY…WSEH), 159–244 (QRQK…SPAP), and 321–461 (VAQQ…APGR). Residues 22–32 (QPYQTLKYSSK) are compositionally biased toward polar residues. 2 stretches are compositionally biased toward basic and acidic residues: residues 33–46 (SHPDHRHEKMRDSN) and 56–70 (RRSDSPDNKHMDNTG). Over residues 72-82 (GRAKAIHPHRG) the composition is skewed to basic residues. The segment covering 99–116 (NHSSLHSSNSHSNPNKSS) has biased composition (low complexity). The WW domain occupies 120–153 (FEPADDWSEHISSSGKKYYYNCRTEVSQWEKPKE). The segment covering 175–184 (PKDRDYRREA) has biased composition (basic and acidic residues). The span at 188 to 200 (TPASYSSTKSSIA) shows a compositional bias: polar residues. Over residues 204–217 (PSSLTPSSSSAAVS) the composition is skewed to low complexity. Polar residues-rich tracts occupy residues 223-234 (NSASSASGSTVP) and 321-378 (VAQQ…MTVK). A compositionally biased stretch (low complexity) spans 402–431 (SPRTLQRQSSQRSPSPGPNHMGSNSSSSSN). A compositionally biased stretch (gly residues) spans 432 to 443 (NGGGGGGQGPGV). Positions 529-555 (QATLREQRILFLRQQIKELEKLKNQNS) form a coiled coil.

The protein localises to the nucleus. Functionally, acts as a linker between gene transcription and histone H2B monoubiquitination at 'Lys-120' (H2BK120ub1). Positive regulator of amino acid starvation-induced autophagy. Positively regulates MTOR activity. May negatively regulate the ubiquitin proteasome pathway. This is WW domain-containing adapter protein with coiled-coil (waca) from Danio rerio (Zebrafish).